The primary structure comprises 270 residues: uncharacterized protein (270 aa).

The active-site Proton donor is H171. The active-site Nucleophile is C261.

The protein belongs to the DDAH family.

This is an uncharacterized protein from Aeropyrum pernix (strain ATCC 700893 / DSM 11879 / JCM 9820 / NBRC 100138 / K1).